The following is a 30-amino-acid chain: Thylakoid lumenal 17 kDa protein (30 aa).

The protein resides in the plastid. The protein localises to the chloroplast thylakoid lumen. This Spinacia oleracea (Spinach) protein is Thylakoid lumenal 17 kDa protein.